The primary structure comprises 794 residues: Sucrose synthase (794 aa).

Positions 263-742 are GT-B glycosyltransferase; sequence MISRLLILSP…ALDRVASRYT (480 aa).

Belongs to the glycosyltransferase 1 family. In terms of assembly, homotetramer.

It carries out the reaction an NDP-alpha-D-glucose + D-fructose = a ribonucleoside 5'-diphosphate + sucrose + H(+). The catalysed reaction is ADP-alpha-D-glucose + D-fructose = sucrose + ADP + H(+). With respect to regulation, inhibited by GDP over 10 mM and by over 2 mM MgCl(2). In terms of biological role, catalyzes the reversible conversion of sucrose and a nucleotide disphosphate (NDP) into fructose and NDP-glucose; although the reaction is freely reversible in vitro, the physiological reaction seems to be sucrose cleavage. Unlike characterized plant enzymes prefers ADP as a cosubstrate, whereas plants prefer UDP. The KM for sucrose is 8-fold lower in the presence of ADP than UDP. Its preference for ADP over UDP suggests it may directly link sucrose and glycogen metabolism. In Nitrosomonas europaea (strain ATCC 19718 / CIP 103999 / KCTC 2705 / NBRC 14298), this protein is Sucrose synthase (ss2).